The sequence spans 365 residues: Peptide chain release factor 2 (365 aa).

Gln-252 is subject to N5-methylglutamine.

This sequence belongs to the prokaryotic/mitochondrial release factor family. Methylated by PrmC. Methylation increases the termination efficiency of RF2.

It is found in the cytoplasm. In terms of biological role, peptide chain release factor 2 directs the termination of translation in response to the peptide chain termination codons UGA and UAA. In Pectobacterium atrosepticum (strain SCRI 1043 / ATCC BAA-672) (Erwinia carotovora subsp. atroseptica), this protein is Peptide chain release factor 2.